A 67-amino-acid chain; its full sequence is Large ribosomal subunit protein bL35 (67 aa).

Belongs to the bacterial ribosomal protein bL35 family.

This chain is Large ribosomal subunit protein bL35, found in Rhizorhabdus wittichii (strain DSM 6014 / CCUG 31198 / JCM 15750 / NBRC 105917 / EY 4224 / RW1) (Sphingomonas wittichii).